We begin with the raw amino-acid sequence, 456 residues long: Cysteine--tRNA ligase (456 aa).

Cysteine 29 lines the Zn(2+) pocket. Positions 31-41 match the 'HIGH' region motif; it reads VTVYDYCHVGH. Positions 210, 235, and 239 each coordinate Zn(2+). Positions 267-271 match the 'KMSKS' region motif; it reads KMSKS. Lysine 270 serves as a coordination point for ATP.

Belongs to the class-I aminoacyl-tRNA synthetase family. As to quaternary structure, monomer. It depends on Zn(2+) as a cofactor.

It is found in the cytoplasm. The catalysed reaction is tRNA(Cys) + L-cysteine + ATP = L-cysteinyl-tRNA(Cys) + AMP + diphosphate. In Hydrogenovibrio crunogenus (strain DSM 25203 / XCL-2) (Thiomicrospira crunogena), this protein is Cysteine--tRNA ligase.